We begin with the raw amino-acid sequence, 192 residues long: UPF0301 protein Bcep18194_A3962 (192 aa).

It belongs to the UPF0301 (AlgH) family.

This Burkholderia lata (strain ATCC 17760 / DSM 23089 / LMG 22485 / NCIMB 9086 / R18194 / 383) protein is UPF0301 protein Bcep18194_A3962.